Here is a 113-residue protein sequence, read N- to C-terminus: MHILDKVDAAQLRDDIPEFRAGDTLDVHVKVIEGSKSRLQVFRGVVIRRQNSGIRETFTIRKVSFGIGVERTFPVHSPNIDRIDVLSRGKVRRAKLYYLRERRGKAARIKERI.

Belongs to the bacterial ribosomal protein bL19 family.

Functionally, this protein is located at the 30S-50S ribosomal subunit interface and may play a role in the structure and function of the aminoacyl-tRNA binding site. This Corynebacterium jeikeium (strain K411) protein is Large ribosomal subunit protein bL19.